We begin with the raw amino-acid sequence, 246 residues long: Ribonuclease 3 (246 aa).

An RNase III domain is found at 18–147 (FQELQKKIGI…FIGALYLDQG (130 aa)). Glu-60 lines the Mg(2+) pocket. The active site involves Asp-64. Mg(2+) contacts are provided by Asp-133 and Glu-136. Residue Glu-136 is part of the active site. Residues 173-242 (DFKSQLQELV…AQMALETLRA (70 aa)) enclose the DRBM domain.

Belongs to the ribonuclease III family. As to quaternary structure, homodimer. The cofactor is Mg(2+).

It is found in the cytoplasm. It carries out the reaction Endonucleolytic cleavage to 5'-phosphomonoester.. Digests double-stranded RNA. Involved in the processing of primary rRNA transcript to yield the immediate precursors to the large and small rRNAs (23S and 16S). Processes some mRNAs, and tRNAs when they are encoded in the rRNA operon. Processes pre-crRNA and tracrRNA of type II CRISPR loci if present in the organism. This is Ribonuclease 3 from Geobacillus thermodenitrificans (strain NG80-2).